The primary structure comprises 278 residues: Sulfur carrier protein FdhD (278 aa).

Cys-121 (cysteine persulfide intermediate) is an active-site residue. 260 to 265 contacts Mo-bis(molybdopterin guanine dinucleotide); that stretch reads FCKPGR.

This sequence belongs to the FdhD family.

It localises to the cytoplasm. In terms of biological role, required for formate dehydrogenase (FDH) activity. Acts as a sulfur carrier protein that transfers sulfur from IscS to the molybdenum cofactor prior to its insertion into FDH. This is Sulfur carrier protein FdhD from Salmonella heidelberg (strain SL476).